The following is a 558-amino-acid chain: CTP synthase (558 aa).

An amidoligase domain region spans residues 1–267; it reads MAKFVFVTGG…CLEMLDVLNL (267 aa). S13 contributes to the CTP binding site. Residue S13 coordinates UTP. Residues 14 to 19 and D71 each bind ATP; that span reads SIGKGI. Mg(2+)-binding residues include D71 and E141. CTP-binding positions include 148–150, 188–193, and K224; these read DIE and KTKPTQ. Residues 188 to 193 and K224 contribute to the UTP site; that span reads KTKPTQ. Positions 292–534 constitute a Glutamine amidotransferase type-1 domain; it reads KVALVGKYVQ…IEAAQLRLPA (243 aa). G354 lines the L-glutamine pocket. Catalysis depends on C381, which acts as the Nucleophile; for glutamine hydrolysis. Residues 382 to 385, E405, and R462 contribute to the L-glutamine site; that span reads LGMQ. Active-site residues include H507 and E509. Residues 536 to 558 form a disordered region; that stretch reads PDEALRRQSQTNISAQEQPSRIG. Polar residues predominate over residues 542–558; sequence RQSQTNISAQEQPSRIG.

It belongs to the CTP synthase family. In terms of assembly, homotetramer.

The enzyme catalyses UTP + L-glutamine + ATP + H2O = CTP + L-glutamate + ADP + phosphate + 2 H(+). It catalyses the reaction L-glutamine + H2O = L-glutamate + NH4(+). The catalysed reaction is UTP + NH4(+) + ATP = CTP + ADP + phosphate + 2 H(+). It participates in pyrimidine metabolism; CTP biosynthesis via de novo pathway; CTP from UDP: step 2/2. Its activity is regulated as follows. Allosterically activated by GTP, when glutamine is the substrate; GTP has no effect on the reaction when ammonia is the substrate. The allosteric effector GTP functions by stabilizing the protein conformation that binds the tetrahedral intermediate(s) formed during glutamine hydrolysis. Inhibited by the product CTP, via allosteric rather than competitive inhibition. In terms of biological role, catalyzes the ATP-dependent amination of UTP to CTP with either L-glutamine or ammonia as the source of nitrogen. Regulates intracellular CTP levels through interactions with the four ribonucleotide triphosphates. The polypeptide is CTP synthase (Prochlorococcus marinus (strain MIT 9313)).